The primary structure comprises 614 residues: uncharacterized protein (614 aa).

4 helical membrane passes run 41 to 61, 87 to 107, 157 to 177, and 178 to 198; these read GWIF…AVLF, LIGM…ASAV, DTVL…ITSG, and VVLV…IILF. An ABC transmembrane type-1 domain is found at 43–330; the sequence is IFLLAILTVG…IMWESARLFE (288 aa). The 240-residue stretch at 364 to 603 folds into the ABC transporter domain; sequence IKFNDITFAY…NGLYAKLWNH (240 aa). ATP is bound at residue 397-404; the sequence is GRSGAGKS.

This sequence belongs to the ABC transporter superfamily.

It is found in the cell membrane. This is an uncharacterized protein from Haemophilus influenzae (strain ATCC 51907 / DSM 11121 / KW20 / Rd).